The sequence spans 331 residues: MVSYKEAGVNIEEGYKSVDLIKKHASKTFTKGVLNNLGSFAGMFELPKYKNPVLVSGTDGVGTKLDIAFRMKKYNTVGIDCVAMCVNDILCHGAKPLFFLDYIACGKLEAEVAAQLVEGVSNGCIQSECALIGGETAEMPGFYRDGEYDIAGFAVGVAEKDEIIDGSKIEDGDVLIGIASSGPHSNGYSLIRKIVEDLHKDFAGDKIGNTLLTPTKIYVKPVMKLLEKYNIKGMAHVTGGGFYENIPRMFKEDFTAVINKKSYPVPNIFNHLMNLGVEEDHMYNTFNMGIGFVLCVNEKDGENIIKDLIEMGEKGYKIGYVKKGDKSVELI.

This sequence belongs to the AIR synthase family.

It localises to the cytoplasm. The catalysed reaction is 2-formamido-N(1)-(5-O-phospho-beta-D-ribosyl)acetamidine + ATP = 5-amino-1-(5-phospho-beta-D-ribosyl)imidazole + ADP + phosphate + H(+). The protein operates within purine metabolism; IMP biosynthesis via de novo pathway; 5-amino-1-(5-phospho-D-ribosyl)imidazole from N(2)-formyl-N(1)-(5-phospho-D-ribosyl)glycinamide: step 2/2. The protein is Phosphoribosylformylglycinamidine cyclo-ligase of Clostridium botulinum (strain 657 / Type Ba4).